Here is a 269-residue protein sequence, read N- to C-terminus: Cbp/p300-interacting transactivator 2 (269 aa).

The tract at residues 142-200 (AGHQMNGTNQHFRDCNPKHSGGSSTPGGAGGSGTPGGSGGTSGGAGGSSAGGSGGGSTM) is disordered. The segment covering 165–198 (STPGGAGGSGTPGGSGGTSGGAGGSSAGGSGGGS) has biased composition (gly residues).

Belongs to the CITED family. As to quaternary structure, interacts (via C-terminus) with EP300 (via CH1 domain); the interaction is stimulated in response to hypoxia. Interacts with PPARA. Interacts (via C-terminus) with TFAP2A, TFAP2B and TFAP2C. Interacts (via C-terminus) with SMAD2. Interacts (via C-terminus) with SMAD3 (via MH2 domain). Interacts with LHX2 (via LIM domains). Interacts with WT1 isoform 1 and isoform 3. In terms of tissue distribution, ubiquitous.

Its subcellular location is the nucleus. Transcriptional coactivator of the p300/CBP-mediated transcription complex. Acts as a bridge, linking TFAP2 transcription factors and the p300/CBP transcriptional coactivator complex in order to stimulate TFAP2-mediated transcriptional activation. Positively regulates TGF-beta signaling through its association with the SMAD/p300/CBP-mediated transcriptional coactivator complex. Stimulates the peroxisome proliferator-activated receptors PPARA transcriptional activity. Enhances estrogen-dependent transactivation mediated by estrogen receptors. Also acts as a transcriptional corepressor; interferes with the binding of the transcription factors HIF1A or STAT2 and the p300/CBP transcriptional coactivator complex. Participates in sex determination and early gonad development by stimulating transcription activation of SRY. Plays a role in controlling left-right patterning during embryogenesis; potentiates transcriptional activation of NODAL-mediated gene transcription in the left lateral plate mesoderm (LPM). Plays an essential role in differentiation of the adrenal cortex from the adrenogonadal primordium (AGP); stimulates WT1-mediated transcription activation thereby up-regulating the nuclear hormone receptor NR5A1 promoter activity. Associates with chromatin to the PITX2 P1 promoter region. In Mus musculus (Mouse), this protein is Cbp/p300-interacting transactivator 2 (Cited2).